The primary structure comprises 86 residues: U-actitoxin-Avd10a (86 aa).

The first 20 residues, 1 to 20 (MSRIAILLFVAFLLVAGISA), serve as a signal peptide directing secretion. Residues 21 to 42 (KSTAHFKKNVLADLFKERRFNA) constitute a propeptide that is removed on maturation. A ShKT domain is found at 51-86 (CVNIDVDSFCDGMAERGACNIIPQMATNCAKACNSC). 3 disulfide bridges follow: C51–C86, C60–C79, and C69–C83.

It belongs to the sea anemone type 1 potassium channel toxin family. Type 1b subfamily.

Its subcellular location is the secreted. The protein resides in the nematocyst. Inhibits voltage-gated potassium channels (Kv1/KCNA). The chain is U-actitoxin-Avd10a from Anemonia viridis (Snakelocks anemone).